The chain runs to 112 residues: Elongin-C (112 aa).

This sequence belongs to the SKP1 family. In terms of assembly, heterotrimer of an A (ELOA, ELOA2 or ELOA3P), ELOB and ELOC subunit. The elongin BC complex interacts with EPOP; leading to recruit the elongin BC complex to Polycomb group (PcG) target genes, thereby restricting excessive activity of the PRC2/EED-EZH2 complex. Component of multiple cullin-RING E3 ubiquitin-protein ligase complexes composed of Elongin BC (ELOB and ELOC), a cullin (CUL2 or CUL5), a catalytic subunit (RBX1 or RNF7/RBX2), as well as a substrate adapter protein that can be either ASB2, ASB9, ASB11, KLHDC2, KLHDC3, KLHDC10, APPBP2, FEM1A, FEM1B, FEM1C, LRR1, PCMTD1, SOCS1, SOCS2, SOCS5, SPSB1, SPSB3, ELOA, VHL, WSB1, ZYG11B or RAB40C. Interacts with TMF1. As part of the Elongin BC E3 ubiquitin ligase complex; interacts with NRBP1. May form oligomers as a KLHDC2/KLHDC3-ELOB-ELOC complex; this interaction is autoinhibitory for the E3 ligase complex as the substrate-binding site of KLHDC2/KLHDC3 is blocked in the oligomer. Ubiquitinated by the DCX(AMBRA1) complex, leading to its degradation by the proteasome.

Its subcellular location is the nucleus. The protein operates within protein modification; protein ubiquitination. Functionally, SIII, also known as elongin, is a general transcription elongation factor that increases the RNA polymerase II transcription elongation past template-encoded arresting sites. Subunit A is transcriptionally active and its transcription activity is strongly enhanced by binding to the dimeric complex of the SIII regulatory subunits B and C (elongin BC complex). In embryonic stem cells, the elongin BC complex is recruited by EPOP to Polycomb group (PcG) target genes in order generate genomic region that display both active and repressive chromatin properties, an important feature of pluripotent stem cells. Its function is as follows. Core component of multiple cullin-RING-based ECS (ElonginB/C-CUL2/5-SOCS-box protein) E3 ubiquitin-protein ligase complexes, which mediate the ubiquitination of target proteins. By binding to BC-box motifs it seems to link target recruitment subunits, like VHL and members of the SOCS box family, to Cullin/RBX1 modules that activate E2 ubiquitination enzymes. Component the von Hippel-Lindau ubiquitination complex CBC(VHL). A number of ECS complexes (containing either KLHDC2, KLHDC3, KLHDC10, APPBP2, FEM1A, FEM1B or FEM1C as substrate-recognition component) are part of the DesCEND (destruction via C-end degrons) pathway, which recognizes a C-degron located at the extreme C terminus of target proteins, leading to their ubiquitination and degradation. The ECS(ASB9) complex mediates ubiquitination and degradation of CKB. As part of a multisubunit ubiquitin ligase complex, polyubiquitinates monoubiquitinated POLR2A. ECS(LRR1) ubiquitinates MCM7 and promotes CMG replisome disassembly by VCP and chromatin extraction during S-phase. As part of the ECS(RAB40C) complex, mediates ANKRD28 ubiquitination and degradation, thereby inhibiting protein phosphatase 6 (PP6) complex activity and focal adhesion assembly during cell migration. This chain is Elongin-C (ELOC), found in Bos taurus (Bovine).